Consider the following 244-residue polypeptide: Carboxy-S-adenosyl-L-methionine synthase (244 aa).

S-adenosyl-L-methionine contacts are provided by residues tyrosine 40, 65–67, 90–91, 119–120, asparagine 134, and arginine 201; these read GCS, DN, and DL.

This sequence belongs to the class I-like SAM-binding methyltransferase superfamily. Cx-SAM synthase family. Homodimer.

It carries out the reaction prephenate + S-adenosyl-L-methionine = carboxy-S-adenosyl-L-methionine + 3-phenylpyruvate + H2O. Functionally, catalyzes the conversion of S-adenosyl-L-methionine (SAM) to carboxy-S-adenosyl-L-methionine (Cx-SAM). This Trichlorobacter lovleyi (strain ATCC BAA-1151 / DSM 17278 / SZ) (Geobacter lovleyi) protein is Carboxy-S-adenosyl-L-methionine synthase.